A 200-amino-acid chain; its full sequence is Dephospho-CoA kinase (200 aa).

Residues 4-200 (VIGLTGGIAS…AILKKWNIID (197 aa)) form the DPCK domain. Position 12-17 (12-17 (ASGKST)) interacts with ATP.

The protein belongs to the CoaE family.

Its subcellular location is the cytoplasm. The enzyme catalyses 3'-dephospho-CoA + ATP = ADP + CoA + H(+). It participates in cofactor biosynthesis; coenzyme A biosynthesis; CoA from (R)-pantothenate: step 5/5. In terms of biological role, catalyzes the phosphorylation of the 3'-hydroxyl group of dephosphocoenzyme A to form coenzyme A. The protein is Dephospho-CoA kinase of Bacillus thuringiensis subsp. konkukian (strain 97-27).